We begin with the raw amino-acid sequence, 192 residues long: UPF0149 protein VIBHAR_03551 (192 aa).

The protein belongs to the UPF0149 family.

The polypeptide is UPF0149 protein VIBHAR_03551 (Vibrio campbellii (strain ATCC BAA-1116)).